A 274-amino-acid polypeptide reads, in one-letter code: Pyrroline-5-carboxylate reductase 3 (274 aa).

A2 is modified (N-acetylalanine).

Belongs to the pyrroline-5-carboxylate reductase family. Homodecamer; composed of 5 homodimers.

Its subcellular location is the cytoplasm. It catalyses the reaction L-proline + NADP(+) = (S)-1-pyrroline-5-carboxylate + NADPH + 2 H(+). The enzyme catalyses L-proline + NAD(+) = (S)-1-pyrroline-5-carboxylate + NADH + 2 H(+). It participates in amino-acid biosynthesis; L-proline biosynthesis; L-proline from L-glutamate 5-semialdehyde: step 1/1. Oxidoreductase that catalyzes the last step in proline biosynthesis, which corresponds to the reduction of pyrroline-5-carboxylate (P5C) to L-proline using NAD(P)H. Proline is synthesized from either glutamate or ornithine; both are converted to P5C, and then to proline via pyrroline-5-carboxylate reductases (PYCRs). PYCR3 is exclusively linked to the biosynthesis of proline from ornithine. This Macaca fascicularis (Crab-eating macaque) protein is Pyrroline-5-carboxylate reductase 3.